Reading from the N-terminus, the 247-residue chain is NAD(P)H-quinone oxidoreductase subunit K, chloroplastic (247 aa).

[4Fe-4S] cluster-binding residues include C61, C62, C126, and C157.

This sequence belongs to the complex I 20 kDa subunit family. As to quaternary structure, NDH is composed of at least 16 different subunits, 5 of which are encoded in the nucleus. It depends on [4Fe-4S] cluster as a cofactor.

It localises to the plastid. The protein localises to the chloroplast thylakoid membrane. It carries out the reaction a plastoquinone + NADH + (n+1) H(+)(in) = a plastoquinol + NAD(+) + n H(+)(out). It catalyses the reaction a plastoquinone + NADPH + (n+1) H(+)(in) = a plastoquinol + NADP(+) + n H(+)(out). Its function is as follows. NDH shuttles electrons from NAD(P)H:plastoquinone, via FMN and iron-sulfur (Fe-S) centers, to quinones in the photosynthetic chain and possibly in a chloroplast respiratory chain. The immediate electron acceptor for the enzyme in this species is believed to be plastoquinone. Couples the redox reaction to proton translocation, and thus conserves the redox energy in a proton gradient. The polypeptide is NAD(P)H-quinone oxidoreductase subunit K, chloroplastic (Anthoceros angustus (Hornwort)).